The following is a 387-amino-acid chain: MKQAVIVDCIRTPMGRSKAGVFRNVRAETLSAELMKGLLLRNPQLDPNLIEDVIWGCVQQTLEQGFNIARNASLLAGIPKTAGAVTVNRLCGSSMDAIHQAARAIMTGMGDTFIIGGVEHMGHVPMSHGVDFHPGLANNVAKASGMMGLTAEMLGKLHGITREQQDAFAVRSHQRAYAATVEGRFAKEIYGIEGHDANGALIKVLQDEVIRPETTMESLAALRPVFDPVNGTVTAGTSSALSDGASAMLIMEESKARALGLPIRARIRSMAVAGCDAAIMGYGPVPATQKALARAGITVADLDVIELNEAFAAQSLPCVKDLGLADVVDDKINLNGGAIALGHPLGCSGARISTTLINLMEDKDATLGLATMCIGLGQGIATVFERV.

The Acyl-thioester intermediate role is filled by Cys91. Catalysis depends on proton acceptor residues His343 and Cys373.

Belongs to the thiolase-like superfamily. Thiolase family. As to quaternary structure, heterotetramer of two alpha chains (FadB) and two beta chains (FadA).

The protein resides in the cytoplasm. The enzyme catalyses an acyl-CoA + acetyl-CoA = a 3-oxoacyl-CoA + CoA. Its pathway is lipid metabolism; fatty acid beta-oxidation. Catalyzes the final step of fatty acid oxidation in which acetyl-CoA is released and the CoA ester of a fatty acid two carbons shorter is formed. This Shewanella baltica (strain OS185) protein is 3-ketoacyl-CoA thiolase.